Reading from the N-terminus, the 480-residue chain is Alpha-glucosidase (480 aa).

4–70 (VKIGIIGAGS…ADLKFEKTMN (67 aa)) contacts NAD(+). Asp119 and Asn153 together coordinate substrate. Cys174 contacts Mn(2+). Catalysis depends on His175, which acts as the Proton donor. Position 203 (His203) interacts with Mn(2+). Asp260 functions as the Proton acceptor in the catalytic mechanism.

Belongs to the glycosyl hydrolase 4 family. As to quaternary structure, homodimer. The cofactor is NAD(+). Requires Mn(2+) as cofactor. It depends on Co(2+) as a cofactor. Ni(2+) serves as cofactor.

It carries out the reaction Hydrolysis of terminal, non-reducing (1-&gt;4)-linked alpha-D-glucose residues with release of alpha-D-glucose.. Inhibited by Hg(2+) ion and EDTA. Functionally, alpha-glycosidase with a very broad specificity. Hydrolyzes maltose and other small maltooligosaccharides but is inactive against the polymeric substrate starch. AglA is not specific with respect to the configuration at the C-4 position of its substrates because glycosidic derivatives of D-galactose are also hydrolyzed. Does not cleave beta-glycosidic bonds. In Thermotoga maritima (strain ATCC 43589 / DSM 3109 / JCM 10099 / NBRC 100826 / MSB8), this protein is Alpha-glucosidase (aglA).